The chain runs to 166 residues: MIERTALYAGSFDPLTNGHLDVLKASLAVADIVYAAIGIHPGKKPLFSFEERVQLIEDATKAEFGRDGARIKVVAFDGLVIDAARKQGASIMIRGLRDGTDLDYEMQMAGMNETMAPELQTVFLPASPSVRTITATLVRQIASMGGDIRPFVPAAVAGALTAKFAK.

S11 lines the substrate pocket. Residues 11–12 (SF) and H19 each bind ATP. Residues K43, V80, and R94 each coordinate substrate. ATP contacts are provided by residues 95 to 97 (GLR), E105, and 130 to 136 (VRTITAT).

It belongs to the bacterial CoaD family. Homohexamer. The cofactor is Mg(2+).

The protein resides in the cytoplasm. The catalysed reaction is (R)-4'-phosphopantetheine + ATP + H(+) = 3'-dephospho-CoA + diphosphate. The protein operates within cofactor biosynthesis; coenzyme A biosynthesis; CoA from (R)-pantothenate: step 4/5. In terms of biological role, reversibly transfers an adenylyl group from ATP to 4'-phosphopantetheine, yielding dephospho-CoA (dPCoA) and pyrophosphate. This chain is Phosphopantetheine adenylyltransferase, found in Mesorhizobium japonicum (strain LMG 29417 / CECT 9101 / MAFF 303099) (Mesorhizobium loti (strain MAFF 303099)).